Reading from the N-terminus, the 617-residue chain is Proline--tRNA ligase (617 aa).

Belongs to the class-II aminoacyl-tRNA synthetase family. ProS type 1 subfamily. In terms of assembly, homodimer.

The protein resides in the cytoplasm. The catalysed reaction is tRNA(Pro) + L-proline + ATP = L-prolyl-tRNA(Pro) + AMP + diphosphate. Catalyzes the attachment of proline to tRNA(Pro) in a two-step reaction: proline is first activated by ATP to form Pro-AMP and then transferred to the acceptor end of tRNA(Pro). As ProRS can inadvertently accommodate and process non-cognate amino acids such as alanine and cysteine, to avoid such errors it has two additional distinct editing activities against alanine. One activity is designated as 'pretransfer' editing and involves the tRNA(Pro)-independent hydrolysis of activated Ala-AMP. The other activity is designated 'posttransfer' editing and involves deacylation of mischarged Ala-tRNA(Pro). The misacylated Cys-tRNA(Pro) is not edited by ProRS. This is Proline--tRNA ligase from Streptococcus agalactiae serotype Ia (strain ATCC 27591 / A909 / CDC SS700).